The primary structure comprises 135 residues: Large ribosomal subunit protein uL16c (135 aa).

The protein belongs to the universal ribosomal protein uL16 family. Part of the 50S ribosomal subunit.

The protein localises to the plastid. Its subcellular location is the chloroplast. The polypeptide is Large ribosomal subunit protein uL16c (Acorus calamus var. americanus (American sweet flag)).